Reading from the N-terminus, the 209-residue chain is Large ribosomal subunit protein uL4 (209 aa).

The interval 46–71 is disordered; it reads GTSSTKTRSEVRGSSKKPWKQKGTGR. Over residues 59–71 the composition is skewed to basic residues; sequence SSKKPWKQKGTGR.

This sequence belongs to the universal ribosomal protein uL4 family. Part of the 50S ribosomal subunit.

In terms of biological role, one of the primary rRNA binding proteins, this protein initially binds near the 5'-end of the 23S rRNA. It is important during the early stages of 50S assembly. It makes multiple contacts with different domains of the 23S rRNA in the assembled 50S subunit and ribosome. Functionally, forms part of the polypeptide exit tunnel. The polypeptide is Large ribosomal subunit protein uL4 (Borreliella afzelii (strain PKo) (Borrelia afzelii)).